An 86-amino-acid polypeptide reads, in one-letter code: Large ribosomal subunit protein bL31 (86 aa).

Residues 65 to 86 are disordered; sequence YGMGSADSATSKETKESKKSDK. A compositionally biased stretch (basic and acidic residues) spans 74-86; sequence TSKETKESKKSDK.

This sequence belongs to the bacterial ribosomal protein bL31 family. Type A subfamily. In terms of assembly, part of the 50S ribosomal subunit.

Functionally, binds the 23S rRNA. In Prochlorococcus marinus subsp. pastoris (strain CCMP1986 / NIES-2087 / MED4), this protein is Large ribosomal subunit protein bL31.